Here is a 1274-residue protein sequence, read N- to C-terminus: Myosin-binding protein C, cardiac-type (1274 aa).

M1 is subject to N-acetylmethionine. Position 47 is a phosphoserine (S47). Residues 107 to 141 show a composition bias toward low complexity; the sequence is APAPAEATGAPGEAPAPAAELGESAPSPKGSSSAA. The segment at 107-153 is disordered; the sequence is APAPAEATGAPGEAPAPAAELGESAPSPKGSSSAALNGPTPGAPDDP. An Ig-like C2-type 1 domain is found at 153–256; sequence PIGLFVMRPQ…FDCSNFNLTV (104 aa). Q208, H210, E223, and H225 together coordinate Zn(2+). A phosphoserine; by PKA and PKC mark is found at S275, S284, and S304. 2 positions are modified to phosphoserine: S311 and S427. Ig-like C2-type domains are found at residues 362–452, 453–543, 544–633, and 645–771; these read STAF…VKEP, PVLI…VQEK, KLEV…HFME, and PKIH…VIDV. C436 and C443 are joined by a disulfide. S550 carries the post-translational modification Phosphoserine. A Phosphothreonine modification is found at T607. 2 consecutive Fibronectin type-III domains span residues 774–870 and 872–967; these read APAA…IGPP and EPTH…VQEI. Positions 971–1065 constitute an Ig-like C2-type 6 domain; the sequence is PRLQLPRHLR…ATLVLQVVDK (95 aa). Positions 1068–1163 constitute a Fibronectin type-III 3 domain; it reads PPQDLRVTDA…TKEPVFIPRP (96 aa). In terms of domain architecture, Ig-like C2-type 7 spans 1181–1274; the sequence is PSFTQPLVNR…ECRLEVRVPQ (94 aa). R1241 carries the post-translational modification Omega-N-methylarginine.

Belongs to the immunoglobulin superfamily. MyBP family. Substrate for phosphorylation by PKA and PKC. Reversible phosphorylation appears to modulate contraction. In terms of processing, polyubiquitinated.

Thick filament-associated protein located in the crossbridge region of vertebrate striated muscle a bands. In vitro it binds MHC, F-actin and native thin filaments, and modifies the activity of actin-activated myosin ATPase. It may modulate muscle contraction or may play a more structural role. The chain is Myosin-binding protein C, cardiac-type (MYBPC3) from Homo sapiens (Human).